The following is a 504-amino-acid chain: Probable cytochrome P450 513E1 (504 aa).

The helical transmembrane segment at 1–21 (MNLYISILILIISLIIFFKNN) threads the bilayer. Heme is bound at residue Cys-450.

The protein belongs to the cytochrome P450 family. The cofactor is heme.

It localises to the membrane. This Dictyostelium discoideum (Social amoeba) protein is Probable cytochrome P450 513E1 (cyp513E1).